The sequence spans 61 residues: MRCLPVFVILLLLIASVPSDAVQLKTKDDMPLPSFNGNARRTPRMLSNKRICCYPNVWCCD.

A signal peptide spans 1 to 21 (MRCLPVFVILLLLIASVPSDA). The propeptide occupies 22–48 (VQLKTKDDMPLPSFNGNARRTPRMLSN). 6'-bromotryptophan is present on Trp-58.

This sequence belongs to the conotoxin T superfamily. Post-translationally, contains 2 disulfide bonds that can be either 'C1-C3, C2-C4' or 'C1-C4, C2-C3', since these disulfide connectivities have been observed for conotoxins with cysteine framework V (for examples, see AC P0DQQ7 and AC P81755). Contains 2 disulfide bonds. In terms of tissue distribution, expressed by the venom duct.

It is found in the secreted. The protein is Conotoxin 3 of Conus textile (Cloth-of-gold cone).